Consider the following 141-residue polypeptide: MAIERTLSIIKPDAVAKNVIGQIYARFEGAGLKVIAAKMVHLSRGEAEQFYGVHKERPFFKDLVDFMVSGPVMIQALEGENAILKNRELMGATDPKKAEKGTIRADFADSIDANAVHGSDAAETAAVEVAFFFPGMNVYSR.

6 residues coordinate ATP: K11, F59, R87, T93, R104, and N114. The active-site Pros-phosphohistidine intermediate is H117.

The protein belongs to the NDK family. As to quaternary structure, homotetramer. Mg(2+) serves as cofactor.

It is found in the cytoplasm. It carries out the reaction a 2'-deoxyribonucleoside 5'-diphosphate + ATP = a 2'-deoxyribonucleoside 5'-triphosphate + ADP. It catalyses the reaction a ribonucleoside 5'-diphosphate + ATP = a ribonucleoside 5'-triphosphate + ADP. Functionally, major role in the synthesis of nucleoside triphosphates other than ATP. The ATP gamma phosphate is transferred to the NDP beta phosphate via a ping-pong mechanism, using a phosphorylated active-site intermediate. This is Nucleoside diphosphate kinase from Delftia acidovorans (strain DSM 14801 / SPH-1).